Here is a 196-residue protein sequence, read N- to C-terminus: Phosphate-specific transport system accessory protein PhoU homolog (196 aa).

Belongs to the PhoU family. Homodimer.

The protein localises to the cytoplasm. In terms of biological role, plays a role in the regulation of phosphate uptake. The polypeptide is Phosphate-specific transport system accessory protein PhoU homolog (Archaeoglobus fulgidus (strain ATCC 49558 / DSM 4304 / JCM 9628 / NBRC 100126 / VC-16)).